The chain runs to 128 residues: Azurin (128 aa).

The region spanning 1-128 (AECKVTVDST…SMMKGTVTVK (128 aa)) is the Plastocyanin-like domain. A disulfide bridge connects residues C3 and C26. Residues H46, C112, H117, and M121 each contribute to the Cu cation site.

It localises to the periplasm. Functionally, transfers electrons from cytochrome c551 to cytochrome oxidase. The chain is Azurin from Pseudomonas fluorescens biotype A.